Here is a 428-residue protein sequence, read N- to C-terminus: Secernin-2 (428 aa).

Cys10 is a catalytic residue.

It belongs to the peptidase C69 family. Secernin subfamily.

The chain is Secernin-2 (scrn2) from Xenopus laevis (African clawed frog).